The primary structure comprises 85 residues: Homeobox protein knotted-1-like 8 (85 aa).

In terms of domain architecture, ELK spans 1–21 (ELKHQLLRKYGGYLGGLRQEF). The homeobox; TALE-type DNA-binding region spans 22–85 (SKRKKKGKLP…NQRKRHWKPA (64 aa)).

This sequence belongs to the TALE/KNOX homeobox family. In terms of tissue distribution, strongly expressed in ear inflorescence primordia and shoot meristem. Weakly expressed in embryos. Absent from leaves.

The protein localises to the nucleus. In terms of biological role, probably binds to the DNA sequence 5'-TGAC-3'. In Zea mays (Maize), this protein is Homeobox protein knotted-1-like 8 (KNOX8).